Here is a 1505-residue protein sequence, read N- to C-terminus: ABC transporter C family member 13 (1505 aa).

The next 12 membrane-spanning stretches (helical) occupy residues 11 to 31 (EAAA…LLLL), 54 to 68 (AVDG…VGAW), 71 to 91 (AALA…SYEV), 102 to 122 (ALLL…LAMQ), 131 to 151 (FPVL…GIAY), 171 to 191 (MVAN…GVMG), 313 to 333 (AFAA…SYFV), 336 to 356 (LSGK…FFVA), 367 to 387 (WYLG…AMVY), 421 to 441 (AWYF…LAIL), 447 to 467 (IAMV…VPVA), and 534 to 554 (FVFW…CILL). The region spanning 314–589 (FAAVNTIVSY…FPDLISMIAQ (276 aa)) is the ABC transmembrane type-1 1 domain. The ABC transporter 1 domain occupies 623-846 (ININDATFSW…GTDFNALVCA (224 aa)). 658–665 (GVIGSGKS) serves as a coordination point for ATP. Over residues 881–897 (DNLKNKVSNNEKPSSTR) the composition is skewed to polar residues. The interval 881 to 919 (DNLKNKVSNNEKPSSTRGIKEKKKKPEERKKKRSVQEEE) is disordered. The span at 904 to 919 (KKPEERKKKRSVQEEE) shows a compositional bias: basic and acidic residues. A run of 6 helical transmembrane segments spans residues 940–960 (GTLI…QIAS), 980–1000 (SVVL…FVFV), 1055–1077 (IAFR…AVMS), 1081–1103 (WQVL…YYIA), 1149–1169 (LLDC…WLCL), and 1174–1194 (LSTF…PGTI). An ABC transmembrane type-1 2 domain is found at 945–1215 (LIILAQTMFQ…GLNLNARMSR (271 aa)). The ABC transporter 2 domain occupies 1262-1496 (IELVDLKVRY…KSSMFMQLVS (235 aa)). An ATP-binding site is contributed by 1296 to 1303 (GRTGSGKS).

The protein belongs to the ABC transporter superfamily. ABCC family. Conjugate transporter (TC 3.A.1.208) subfamily.

It localises to the membrane. Functionally, ABC transporter that may affect phytic acid transport and compartmentalization. May function directly or indirectly in removing phytic acid from the cytosol or in vesicle trafficking. Required for phytic acid accumulation in developing seeds. Phytic acid is the primary storage form of phosphorus in cereal grains and other plant seeds. The protein is ABC transporter C family member 13 of Oryza sativa subsp. indica (Rice).